The chain runs to 557 residues: MHMNISEIYPSSNKIYINCTLYPDVKVGMRQINIRNSSQRFLLYDTAGPYTDCDIKVNLTEGISSIRRDWIARRNDTYPIRKAKTNSDARGVKALSGDDRVILKGIAGGAPVTQLFYAKKGIITPEMEYVAVRENALLEQAEAIPGLLLPTKTRKITPEFVREEVACGRAVIPSNINHPESEPMIIGRNFLVKINANIGNSAVLSNIEDEVKKMVLAVTYGADTVMDLSTGHDIHNIRELIVRNSPVPIGTVPIYQALNKVNGIVGDLSFEVFKETIIEQAEQGVDYFTIHAGVLKSYIEHTRSRTTGIVSRGGAIMAQWCLLHNKENFLYENFEEICEIMRSYDVTFSLGDGLRPGSINDANDVAQFLELRTLGELVKIARAHDCQVIVEGPGHVPMHLIEENVKKQLDFCDEAPFYTLGPLTTDIAPGYDHITSAIGAAMIGWYGTAMLCYVTPKEHLGLPNAEDVKAGVISYKIAAHAADLAKGNPASFARDYALSQARYDFRWEDQFNLSIDPATAKKLHDESLPGKGGKTAHFCSMCGPKFCSMKLSKALND.

Residues N197, M226, Y255, H291, S311 to G313, D352 to R355, and E391 contribute to the substrate site. Zn(2+) is bound at residue H395. A substrate-binding site is contributed by Y418. H459 is a Zn(2+) binding site. Residues C539, C542, and C547 each coordinate [4Fe-4S] cluster.

It belongs to the ThiC family. In terms of assembly, homodimer. It depends on [4Fe-4S] cluster as a cofactor.

The enzyme catalyses 5-amino-1-(5-phospho-beta-D-ribosyl)imidazole + S-adenosyl-L-methionine = 4-amino-2-methyl-5-(phosphooxymethyl)pyrimidine + CO + 5'-deoxyadenosine + formate + L-methionine + 3 H(+). It functions in the pathway cofactor biosynthesis; thiamine diphosphate biosynthesis. In terms of biological role, catalyzes the synthesis of the hydroxymethylpyrimidine phosphate (HMP-P) moiety of thiamine from aminoimidazole ribotide (AIR) in a radical S-adenosyl-L-methionine (SAM)-dependent reaction. The protein is Phosphomethylpyrimidine synthase of Anaplasma phagocytophilum (strain HZ).